A 198-amino-acid chain; its full sequence is Adenine phosphoribosyltransferase (198 aa).

It belongs to the purine/pyrimidine phosphoribosyltransferase family. Homodimer.

Its subcellular location is the cytoplasm. It carries out the reaction AMP + diphosphate = 5-phospho-alpha-D-ribose 1-diphosphate + adenine. Its pathway is purine metabolism; AMP biosynthesis via salvage pathway; AMP from adenine: step 1/1. In terms of biological role, catalyzes a salvage reaction resulting in the formation of AMP, that is energically less costly than de novo synthesis. The chain is Adenine phosphoribosyltransferase from Serratia proteamaculans (strain 568).